Here is an 816-residue protein sequence, read N- to C-terminus: uncharacterized protein (816 aa).

503 to 534 lines the NADP(+) pocket; sequence DTWTVITGGTDGIGKAYIEELCKTRGLKKFYL. Ser-641 contacts substrate. Catalysis depends on Tyr-661, which acts as the Proton acceptor. Transmembrane regions (helical) follow at residues 743–763 and 777–797; these read FGFSKYFSSLLLCSEFISIVL and VFIISRLSIFVHFYHDFFLLN.

The protein belongs to the short-chain dehydrogenases/reductases (SDR) family.

It localises to the membrane. This is an uncharacterized protein from Caenorhabditis elegans.